The chain runs to 64 residues: Large ribosomal subunit protein uL29 (64 aa).

It belongs to the universal ribosomal protein uL29 family.

The polypeptide is Large ribosomal subunit protein uL29 (Burkholderia ambifaria (strain MC40-6)).